The chain runs to 689 residues: DNA ligase (689 aa).

NAD(+) contacts are provided by residues 40–44, 89–90, and E122; these read DQEYD and SL. K124 serves as the catalytic N6-AMP-lysine intermediate. Residues R145, E182, K300, and K325 each coordinate NAD(+). Residues C419, C422, C437, and C442 each coordinate Zn(2+). A BRCT domain is found at 600-689; the sequence is QADGVLTGAT…SADASADASA (90 aa).

The protein belongs to the NAD-dependent DNA ligase family. LigA subfamily. Mg(2+) is required as a cofactor. Requires Mn(2+) as cofactor.

It carries out the reaction NAD(+) + (deoxyribonucleotide)n-3'-hydroxyl + 5'-phospho-(deoxyribonucleotide)m = (deoxyribonucleotide)n+m + AMP + beta-nicotinamide D-nucleotide.. Functionally, DNA ligase that catalyzes the formation of phosphodiester linkages between 5'-phosphoryl and 3'-hydroxyl groups in double-stranded DNA using NAD as a coenzyme and as the energy source for the reaction. It is essential for DNA replication and repair of damaged DNA. The polypeptide is DNA ligase (Gemmatimonas aurantiaca (strain DSM 14586 / JCM 11422 / NBRC 100505 / T-27)).